A 212-amino-acid chain; its full sequence is ATP-dependent dethiobiotin synthetase BioD (212 aa).

Position 13–18 (Gly13–Val18) interacts with ATP. Position 17 (Thr17) interacts with Mg(2+). Lys33 is an active-site residue. A substrate-binding site is contributed by Ser37. Glu100 contributes to the Mg(2+) binding site. Residues Glu100 to Gly103 and Pro184 to Leu186 contribute to the ATP site.

It belongs to the dethiobiotin synthetase family. Homodimer. It depends on Mg(2+) as a cofactor.

It localises to the cytoplasm. The catalysed reaction is (7R,8S)-7,8-diammoniononanoate + CO2 + ATP = (4R,5S)-dethiobiotin + ADP + phosphate + 3 H(+). The protein operates within cofactor biosynthesis; biotin biosynthesis; biotin from 7,8-diaminononanoate: step 1/2. Its function is as follows. Catalyzes a mechanistically unusual reaction, the ATP-dependent insertion of CO2 between the N7 and N8 nitrogen atoms of 7,8-diaminopelargonic acid (DAPA, also called 7,8-diammoniononanoate) to form a ureido ring. The polypeptide is ATP-dependent dethiobiotin synthetase BioD (Rhodopseudomonas palustris (strain ATCC BAA-98 / CGA009)).